A 61-amino-acid chain; its full sequence is Three-finger hemachatoxin (61 aa).

Disulfide bonds link Cys3-Cys22, Cys15-Cys39, Cys43-Cys54, and Cys55-Cys60.

It belongs to the three-finger toxin family. Short-chain subfamily. Type IB cytotoxin sub-subfamily. Expressed by the venom gland.

Its subcellular location is the secreted. This protein lyses red blood cells and has cardiotoxic and hypotensive activities. This chain is Three-finger hemachatoxin, found in Hemachatus haemachatus (Rinkhals).